A 373-amino-acid polypeptide reads, in one-letter code: Transcription factor NF-E2 45 kDa subunit (373 aa).

A required for interaction with MAPK8 region spans residues 1–83; the sequence is MSPCPPQQSR…SGFPLPPPPY (83 aa). Residues 1–206 are transactivation domain; sequence MSPCPPQQSR…PAAETPLALE (206 aa). 2 short sequence motifs (PXY motif) span residues 61–65 and 79–83; these read PPTTY and PPPPY. Residues 127 to 150 are disordered; the sequence is LDIGLPAGPPKPQEDPESDSGLSL. Ser157 is subject to Phosphoserine; by MAPK8. Ser170 is subject to Phosphoserine; by PKA. The tract at residues 205-226 is disordered; it reads LEPSSGPVRAKPTARGEAGSRD. The 64-residue stretch at 266 to 329 folds into the bZIP domain; sequence LVRDIRRRGK…EVMRQQLTEL (64 aa). The segment at 268-287 is basic motif; sequence RDIRRRGKNKVAAQNCRKRK. Residues 291-298 form a leucine-zipper region; that stretch reads IVQLEREL. Lys368 is covalently cross-linked (Glycyl lysine isopeptide (Lys-Gly) (interchain with G-Cter in SUMO1)).

This sequence belongs to the bZIP family. CNC subfamily. As to quaternary structure, homodimer; can bind DNA as a homodimer. Erythroid transcription activator nuclear factor erythroid-derived 2 (NF-E2), composed of a heterodimer of NFE2 and MAFK, possesses transactivation activity on beta-globin. Also forms high affinity heterodimer with MAFG; the interaction promotes erythropoiesis. Interacts (via the PXY motif 1) with ITCH (via the WW 1 domain); the interaction promotes 'Lys63'-linked ubiquitination of NFE2, translocates it to the cytoplasm and inhibits its transactivation activity. Interacts with KMT2D/MLL2; the interaction promotes transactivation of the beta-globin locus. Interacts with MAPK8 (phosphorylated form); the interaction leads to phosphorylation of NFE2 in undifferentiated cells. In terms of processing, phosphorylated on serine residues. In undifferentiated erythrocytes, phosphorylated by MAPK8 which then leads to ubiquitination and protein degradation. Post-translationally, sumoylated. Sumoylation is required for translocation to nuclear bodies PODs, anchoring to the gene loci, and transactivation of the beta-globin gene. Ubiquitinated mainly by 'Lys63'-linked ubiquitin. Polyubiquitination with 'Lys63'-linked ubiquitin by ITCH retains NFE2 in the cytoplasm preventing its transactivation activity. In undifferentiated erythrocyte, ubiquitinated after MAPK8-mediatd phosphorylation leading to protein degradation. In terms of tissue distribution, expressed in hematopoietic cells and also in colon and testis.

It localises to the nucleus. The protein localises to the PML body. It is found in the cytoplasm. Component of the NF-E2 complex essential for regulating erythroid and megakaryocytic maturation and differentiation. Binds to the hypersensitive site 2 (HS2) of the beta-globin control region (LCR). This subunit (NFE2) recognizes the TCAT/C sequence of the AP-1-like core palindrome present in a number of erythroid and megakaryocytic gene promoters. Requires MAFK or other small MAF proteins for binding to the NF-E2 motif. May play a role in all aspects of hemoglobin production from globin and heme synthesis to procurement of iron. The sequence is that of Transcription factor NF-E2 45 kDa subunit (NFE2) from Homo sapiens (Human).